Here is a 255-residue protein sequence, read N- to C-terminus: MTQLHNRTAGQETNRVMTPDELEAALRAVGAERYHNLHPFHRLLHDGALTRGQVQAWALNRYHYQASIPAKDAALLSRLPTAELRREWRRRLVDHDGTEPGTGGIARWLKLAEGVGLDAAYVESREGLLPTTRFAVDAYVTFCREKPILEAIASSLTEMFSPTIIRERVSGMLANYDWVSEETLAYFKPRLTQAPRDVDFALAYVKEHARTPEQQQAVIAALRFKCDVLWSQLDALYYSYVAPGNIPPGAFVPEV.

Belongs to the PqqC family.

The enzyme catalyses 6-(2-amino-2-carboxyethyl)-7,8-dioxo-1,2,3,4,7,8-hexahydroquinoline-2,4-dicarboxylate + 3 O2 = pyrroloquinoline quinone + 2 H2O2 + 2 H2O + H(+). The protein operates within cofactor biosynthesis; pyrroloquinoline quinone biosynthesis. Its function is as follows. Ring cyclization and eight-electron oxidation of 3a-(2-amino-2-carboxyethyl)-4,5-dioxo-4,5,6,7,8,9-hexahydroquinoline-7,9-dicarboxylic-acid to PQQ. The chain is Pyrroloquinoline-quinone synthase from Granulibacter bethesdensis (strain ATCC BAA-1260 / CGDNIH1).